A 435-amino-acid chain; its full sequence is Salicylate hydroxylase (435 aa).

12-41 provides a ligand contact to FAD; that stretch reads RVAIVGGGISGLALALSLCKHSHLNVQLFE.

It depends on FAD as a cofactor.

It catalyses the reaction salicylate + NADH + O2 + 2 H(+) = catechol + CO2 + NAD(+) + H2O. It participates in aromatic compound metabolism; naphthalene degradation. This chain is Salicylate hydroxylase (nahG), found in Pseudomonas putida (Arthrobacter siderocapsulatus).